We begin with the raw amino-acid sequence, 100 residues long: Urease subunit gamma (100 aa).

This sequence belongs to the urease gamma subunit family. As to quaternary structure, heterotrimer of UreA (gamma), UreB (beta) and UreC (alpha) subunits. Three heterotrimers associate to form the active enzyme.

The protein resides in the cytoplasm. The enzyme catalyses urea + 2 H2O + H(+) = hydrogencarbonate + 2 NH4(+). It functions in the pathway nitrogen metabolism; urea degradation; CO(2) and NH(3) from urea (urease route): step 1/1. Expression of the urease operon increases the likelihood of bacterial survival by contributing to acid resistance in vitro and in vivo in BALB/c mice. Y.enterocolitica enters the body via an oral path and must survive the acidic stomach before being able to colonize the intestinal mucosa. The chain is Urease subunit gamma from Yersinia enterocolitica.